Here is a 589-residue protein sequence, read N- to C-terminus: F-box only protein 24 (589 aa).

Residues 23–69 (PISVQLFPPELVEHIVSFLPVKDLVALGQTCHYFHEVCDAEGVWRRI) form the F-box domain. The stretch at 386–435 (GRIFMQGNNRYGQLGTGDKMDRGEPTQVHYLQRPIALWCGLNHSLVLSQT) is one RCC1 repeat. Residues 506–526 (VGGSPEPSQGAGAPQDPGGTA) form a disordered region.

In terms of assembly, directly interacts with SKP1 and CUL1.

Substrate-recognition component of the SCF (SKP1-CUL1-F-box protein)-type E3 ubiquitin ligase complex. This chain is F-box only protein 24 (Fbxo24), found in Mus musculus (Mouse).